Consider the following 167-residue polypeptide: Small ribosomal subunit protein uS5 (167 aa).

In terms of domain architecture, S5 DRBM spans 11 to 74 (LQEKLIAVNR…EKARRNMINV (64 aa)).

Belongs to the universal ribosomal protein uS5 family. Part of the 30S ribosomal subunit. Contacts proteins S4 and S8.

In terms of biological role, with S4 and S12 plays an important role in translational accuracy. Functionally, located at the back of the 30S subunit body where it stabilizes the conformation of the head with respect to the body. The sequence is that of Small ribosomal subunit protein uS5 from Shigella dysenteriae serotype 1 (strain Sd197).